The following is an 88-amino-acid chain: Large ribosomal subunit protein bL27 (88 aa).

Residues 1–21 (MAHKKGTGSTRNGRDSRAQRL) are disordered.

This sequence belongs to the bacterial ribosomal protein bL27 family.

The polypeptide is Large ribosomal subunit protein bL27 (Picosynechococcus sp. (strain ATCC 27264 / PCC 7002 / PR-6) (Agmenellum quadruplicatum)).